The following is a 342-amino-acid chain: Methylthioribose-1-phosphate isomerase (342 aa).

Substrate contacts are provided by residues 44–46 (RGA), Arg87, and Gln194. Asp235 functions as the Proton donor in the catalytic mechanism. 245-246 (NK) lines the substrate pocket.

Belongs to the eIF-2B alpha/beta/delta subunits family. MtnA subfamily.

The enzyme catalyses 5-(methylsulfanyl)-alpha-D-ribose 1-phosphate = 5-(methylsulfanyl)-D-ribulose 1-phosphate. The protein operates within amino-acid biosynthesis; L-methionine biosynthesis via salvage pathway; L-methionine from S-methyl-5-thio-alpha-D-ribose 1-phosphate: step 1/6. Functionally, catalyzes the interconversion of methylthioribose-1-phosphate (MTR-1-P) into methylthioribulose-1-phosphate (MTRu-1-P). The polypeptide is Methylthioribose-1-phosphate isomerase (Acetivibrio thermocellus (strain ATCC 27405 / DSM 1237 / JCM 9322 / NBRC 103400 / NCIMB 10682 / NRRL B-4536 / VPI 7372) (Clostridium thermocellum)).